Reading from the N-terminus, the 155-residue chain is Small ribosomal subunit protein uS7 (155 aa).

This sequence belongs to the universal ribosomal protein uS7 family. In terms of assembly, part of the 30S ribosomal subunit. Contacts proteins S9 and S11.

Functionally, one of the primary rRNA binding proteins, it binds directly to 16S rRNA where it nucleates assembly of the head domain of the 30S subunit. Is located at the subunit interface close to the decoding center, probably blocks exit of the E-site tRNA. In Lactococcus lactis subsp. lactis (strain IL1403) (Streptococcus lactis), this protein is Small ribosomal subunit protein uS7.